A 338-amino-acid chain; its full sequence is Glycerol-3-phosphate dehydrogenase [NAD(P)+] (338 aa).

NADPH contacts are provided by S12, W13, R33, and K110. Positions 110, 141, and 143 each coordinate sn-glycerol 3-phosphate. A145 contacts NADPH. Sn-glycerol 3-phosphate contacts are provided by K196, D249, S259, R260, and N261. Residue K196 is the Proton acceptor of the active site. Residue R260 coordinates NADPH. Residues V284 and E286 each contribute to the NADPH site.

It belongs to the NAD-dependent glycerol-3-phosphate dehydrogenase family.

Its subcellular location is the cytoplasm. The enzyme catalyses sn-glycerol 3-phosphate + NAD(+) = dihydroxyacetone phosphate + NADH + H(+). It carries out the reaction sn-glycerol 3-phosphate + NADP(+) = dihydroxyacetone phosphate + NADPH + H(+). It participates in membrane lipid metabolism; glycerophospholipid metabolism. Its function is as follows. Catalyzes the reduction of the glycolytic intermediate dihydroxyacetone phosphate (DHAP) to sn-glycerol 3-phosphate (G3P), the key precursor for phospholipid synthesis. The sequence is that of Glycerol-3-phosphate dehydrogenase [NAD(P)+] from Limosilactobacillus reuteri (strain DSM 20016) (Lactobacillus reuteri).